The primary structure comprises 465 residues: MVMIETFLGMAKYLSPREDDDWSDRLNYLMTPNILLAFSVLISFKQFGGRPIECMFPNKFPGSWEQYAENYCWSQDTYFVEPTQDVSLLKKEERYTPDRQLSYYQWVPFFLLLQAAFFRAPSYLWKYFSNHSGIRIHEVVEKAKDSANVEEEVREKNILILKRHLSSALRFQANMERKKVQVHKTVTFLNFQYSSGFISWIYLFTKVLYFLNVFAQLYLMNYFLGTNRHHWYGFGVVQDIVQGEPWERSGYFPRAAVCDFEVRQVANIQRYSVQCVLVINIFNEKIFVLLWFWYVILLLSSTVSLVQWFIVLVFPCFSKWFVKQHLALSTLQNFNQRNSRREDSDVSKFVTQYLHKDGVFVLRMVSSHAGIIFATDLVQALYEAYDFQDKNKDVQGSPVSDDLQTISTGAESSIRQRKTRKGSRIEYKAGFPISTSLMPDKDDIESSSTSSEEDQKRVSNVITNI.

4 helical membrane-spanning segments follow: residues Leu29–Gly49, Gln105–Trp125, Ser195–Ala215, and Ile286–Val306. Residues Ile433–Ile465 form a disordered region.

Belongs to the pannexin family.

It is found in the cell membrane. It localises to the cell junction. Its subcellular location is the gap junction. Structural component of the gap junctions. The protein is Innexin-11 (inx-11) of Caenorhabditis elegans.